We begin with the raw amino-acid sequence, 303 residues long: Polyisoprenyl-teichoic acid--peptidoglycan teichoic acid transferase TagU (303 aa).

At 1–4 (MKKK) the chain is on the cytoplasmic side. A helical; Signal-anchor for type II membrane protein membrane pass occupies residues 5–25 (ILFWVLGILGVLIIGGGIYAY). At 26–303 (NVYSSVSNTL…KLRSHLEVTK (278 aa)) the chain is on the extracellular side.

Belongs to the LytR/CpsA/Psr (LCP) family.

The protein resides in the cell membrane. It participates in cell wall biogenesis. In terms of biological role, may catalyze the final step in cell wall teichoic acid biosynthesis, the transfer of the anionic cell wall polymers (APs) from their lipid-linked precursor to the cell wall peptidoglycan (PG). The polypeptide is Polyisoprenyl-teichoic acid--peptidoglycan teichoic acid transferase TagU (Bacillus cereus (strain AH820)).